A 304-amino-acid polypeptide reads, in one-letter code: N-acetylmuramic acid 6-phosphate etherase (304 aa).

Serine 2 carries the post-translational modification Phosphoserine. In terms of domain architecture, SIS spans alanine 59–lysine 222. The active-site Proton donor is the glutamate 87. Glutamate 118 is an active-site residue.

It belongs to the GCKR-like family. MurNAc-6-P etherase subfamily. In terms of assembly, homodimer.

The catalysed reaction is N-acetyl-D-muramate 6-phosphate + H2O = N-acetyl-D-glucosamine 6-phosphate + (R)-lactate. The protein operates within amino-sugar metabolism; N-acetylmuramate degradation. Functionally, specifically catalyzes the cleavage of the D-lactyl ether substituent of MurNAc 6-phosphate, producing GlcNAc 6-phosphate and D-lactate. This is N-acetylmuramic acid 6-phosphate etherase from Bacillus subtilis (strain 168).